The sequence spans 164 residues: Ribosome maturation factor RimM (164 aa).

One can recognise a PRC barrel domain in the interval 90–161; sequence EGRYYVADII…EIIIKPVKTW (72 aa).

The protein belongs to the RimM family. As to quaternary structure, binds ribosomal protein uS19.

It localises to the cytoplasm. Functionally, an accessory protein needed during the final step in the assembly of 30S ribosomal subunit, possibly for assembly of the head region. Essential for efficient processing of 16S rRNA. May be needed both before and after RbfA during the maturation of 16S rRNA. It has affinity for free ribosomal 30S subunits but not for 70S ribosomes. This is Ribosome maturation factor RimM from Clostridium tetani (strain Massachusetts / E88).